The chain runs to 436 residues: UPF0597 protein YhaM (436 aa).

The protein belongs to the UPF0597 family.

This Escherichia coli (strain K12 / MC4100 / BW2952) protein is UPF0597 protein YhaM.